The primary structure comprises 178 residues: Translation initiation factor IF-3 (178 aa).

The disordered stretch occupies residues 1-20; the sequence is MRRPFRATPVQKDGPRSNRD.

The protein belongs to the IF-3 family. Monomer.

It localises to the cytoplasm. In terms of biological role, IF-3 binds to the 30S ribosomal subunit and shifts the equilibrium between 70S ribosomes and their 50S and 30S subunits in favor of the free subunits, thus enhancing the availability of 30S subunits on which protein synthesis initiation begins. The sequence is that of Translation initiation factor IF-3 from Brucella anthropi (strain ATCC 49188 / DSM 6882 / CCUG 24695 / JCM 21032 / LMG 3331 / NBRC 15819 / NCTC 12168 / Alc 37) (Ochrobactrum anthropi).